A 383-amino-acid chain; its full sequence is tRNA-specific 2-thiouridylase MnmA (383 aa).

Residues 11–18 and M37 contribute to the ATP site; that span reads GLSGGVDS. The interval 97-99 is interaction with target base in tRNA; sequence NPD. Catalysis depends on C102, which acts as the Nucleophile. C102 and C200 are joined by a disulfide. G127 lines the ATP pocket. Residues 150–152 are interaction with tRNA; the sequence is KDQ. C200 (cysteine persulfide intermediate) is an active-site residue. The tract at residues 312–313 is interaction with tRNA; the sequence is RY. Residues 361–383 form a disordered region; that stretch reads IDTAHPADRSAPPALQTQSTEVV.

This sequence belongs to the MnmA/TRMU family.

It localises to the cytoplasm. It carries out the reaction S-sulfanyl-L-cysteinyl-[protein] + uridine(34) in tRNA + AH2 + ATP = 2-thiouridine(34) in tRNA + L-cysteinyl-[protein] + A + AMP + diphosphate + H(+). Functionally, catalyzes the 2-thiolation of uridine at the wobble position (U34) of tRNA, leading to the formation of s(2)U34. This is tRNA-specific 2-thiouridylase MnmA from Halorhodospira halophila (strain DSM 244 / SL1) (Ectothiorhodospira halophila (strain DSM 244 / SL1)).